The chain runs to 432 residues: Enolase (432 aa).

Gln167 contacts (2R)-2-phosphoglycerate. Residue Glu209 is the Proton donor of the active site. The Mg(2+) site is built by Asp246, Glu290, and Asp317. (2R)-2-phosphoglycerate-binding residues include Lys342, Arg371, Ser372, and Lys393. The Proton acceptor role is filled by Lys342.

The protein belongs to the enolase family. In terms of assembly, component of the RNA degradosome, a multiprotein complex involved in RNA processing and mRNA degradation. It depends on Mg(2+) as a cofactor.

The protein localises to the cytoplasm. The protein resides in the secreted. It is found in the cell surface. It catalyses the reaction (2R)-2-phosphoglycerate = phosphoenolpyruvate + H2O. Its pathway is carbohydrate degradation; glycolysis; pyruvate from D-glyceraldehyde 3-phosphate: step 4/5. Its function is as follows. Catalyzes the reversible conversion of 2-phosphoglycerate (2-PG) into phosphoenolpyruvate (PEP). It is essential for the degradation of carbohydrates via glycolysis. This Cronobacter sakazakii (strain ATCC BAA-894) (Enterobacter sakazakii) protein is Enolase.